A 123-amino-acid chain; its full sequence is Small ribosomal subunit protein uS12 (123 aa).

Asp-89 is modified (3-methylthioaspartic acid).

Belongs to the universal ribosomal protein uS12 family. In terms of assembly, part of the 30S ribosomal subunit. Contacts proteins S8 and S17. May interact with IF1 in the 30S initiation complex.

Its function is as follows. With S4 and S5 plays an important role in translational accuracy. In terms of biological role, interacts with and stabilizes bases of the 16S rRNA that are involved in tRNA selection in the A site and with the mRNA backbone. Located at the interface of the 30S and 50S subunits, it traverses the body of the 30S subunit contacting proteins on the other side and probably holding the rRNA structure together. The combined cluster of proteins S8, S12 and S17 appears to hold together the shoulder and platform of the 30S subunit. The polypeptide is Small ribosomal subunit protein uS12 (Nitrobacter winogradskyi (strain ATCC 25391 / DSM 10237 / CIP 104748 / NCIMB 11846 / Nb-255)).